The following is a 264-amino-acid chain: S-adenosylmethionine decarboxylase proenzyme (264 aa).

The active-site Schiff-base intermediate with substrate; via pyruvic acid is the serine 113. Serine 113 bears the Pyruvic acid (Ser); by autocatalysis mark. Histidine 118 serves as the catalytic Proton acceptor; for processing activity. Residue cysteine 141 is the Proton donor; for catalytic activity of the active site.

This sequence belongs to the prokaryotic AdoMetDC family. Type 2 subfamily. In terms of assembly, heterooctamer of four alpha and four beta chains arranged as a tetramer of alpha/beta heterodimers. Pyruvate serves as cofactor. In terms of processing, is synthesized initially as an inactive proenzyme. Formation of the active enzyme involves a self-maturation process in which the active site pyruvoyl group is generated from an internal serine residue via an autocatalytic post-translational modification. Two non-identical subunits are generated from the proenzyme in this reaction, and the pyruvate is formed at the N-terminus of the alpha chain, which is derived from the carboxyl end of the proenzyme. The post-translation cleavage follows an unusual pathway, termed non-hydrolytic serinolysis, in which the side chain hydroxyl group of the serine supplies its oxygen atom to form the C-terminus of the beta chain, while the remainder of the serine residue undergoes an oxidative deamination to produce ammonia and the pyruvoyl group blocking the N-terminus of the alpha chain.

It carries out the reaction S-adenosyl-L-methionine + H(+) = S-adenosyl 3-(methylsulfanyl)propylamine + CO2. It participates in amine and polyamine biosynthesis; S-adenosylmethioninamine biosynthesis; S-adenosylmethioninamine from S-adenosyl-L-methionine: step 1/1. Functionally, catalyzes the decarboxylation of S-adenosylmethionine to S-adenosylmethioninamine (dcAdoMet), the propylamine donor required for the synthesis of the polyamines spermine and spermidine from the diamine putrescine. This chain is S-adenosylmethionine decarboxylase proenzyme, found in Pseudomonas paraeruginosa (strain DSM 24068 / PA7) (Pseudomonas aeruginosa (strain PA7)).